We begin with the raw amino-acid sequence, 194 residues long: ECF RNA polymerase sigma factor SigX (194 aa).

The Polymerase core binding motif lies at 32 to 45; it reads DLLQEVYIRVLNSY. The segment at residues 136 to 155 is a DNA-binding region (H-T-H motif); it reads IQETAKALRFSESKVKTTQH.

It belongs to the sigma-70 factor family. ECF subfamily. Interacts transiently with the RNAP core.

Its subcellular location is the cell membrane. In terms of biological role, sigma factors are initiation factors that promote the attachment of RNA polymerase (RNAP) to specific initiation sites and are then released. May be involved in the regulation of iron metabolism. Associates with RNAP core during early growth phases, association decreases as cells age. The chain is ECF RNA polymerase sigma factor SigX (sigX) from Bacillus subtilis (strain 168).